The sequence spans 251 residues: Ubiquinone/menaquinone biosynthesis C-methyltransferase UbiE (251 aa).

S-adenosyl-L-methionine contacts are provided by residues T74, D95, 123–124, and S140; that span reads NA.

It belongs to the class I-like SAM-binding methyltransferase superfamily. MenG/UbiE family.

The enzyme catalyses a 2-demethylmenaquinol + S-adenosyl-L-methionine = a menaquinol + S-adenosyl-L-homocysteine + H(+). The catalysed reaction is a 2-methoxy-6-(all-trans-polyprenyl)benzene-1,4-diol + S-adenosyl-L-methionine = a 5-methoxy-2-methyl-3-(all-trans-polyprenyl)benzene-1,4-diol + S-adenosyl-L-homocysteine + H(+). It participates in quinol/quinone metabolism; menaquinone biosynthesis; menaquinol from 1,4-dihydroxy-2-naphthoate: step 2/2. The protein operates within cofactor biosynthesis; ubiquinone biosynthesis. In terms of biological role, methyltransferase required for the conversion of demethylmenaquinol (DMKH2) to menaquinol (MKH2) and the conversion of 2-polyprenyl-6-methoxy-1,4-benzoquinol (DDMQH2) to 2-polyprenyl-3-methyl-6-methoxy-1,4-benzoquinol (DMQH2). The sequence is that of Ubiquinone/menaquinone biosynthesis C-methyltransferase UbiE from Yersinia enterocolitica serotype O:8 / biotype 1B (strain NCTC 13174 / 8081).